Here is a 799-residue protein sequence, read N- to C-terminus: Protein translocase subunit SecA 1 (799 aa).

ATP-binding positions include glutamine 85, 103–107, and aspartate 504; that span reads GEGKT.

The protein belongs to the SecA family. Monomer and homodimer. Part of the essential Sec protein translocation apparatus which comprises SecA, SecYEG and auxiliary proteins SecDF. Other proteins may also be involved.

It localises to the cell membrane. The protein resides in the cytoplasm. The enzyme catalyses ATP + H2O + cellular proteinSide 1 = ADP + phosphate + cellular proteinSide 2.. Its function is as follows. Part of the Sec protein translocase complex. Interacts with the SecYEG preprotein conducting channel. Has a central role in coupling the hydrolysis of ATP to the transfer of proteins into and across the cell membrane, serving as an ATP-driven molecular motor driving the stepwise translocation of polypeptide chains across the membrane. In Lactobacillus johnsonii (strain CNCM I-12250 / La1 / NCC 533), this protein is Protein translocase subunit SecA 1.